The sequence spans 594 residues: Zinc finger protein 703 (594 aa).

A compositionally biased stretch (polar residues) spans 1–14; it reads MSDSPAGSNPRTPE. 3 disordered regions span residues 1-37, 100-298, and 345-370; these read MSDS…VPAV, TCSQ…GHVA, and LVGG…LTGA. Ser-2 carries the N-acetylserine modification. Gly residues predominate over residues 17–30; sequence GSGGGSSSGGGGGK. Composition is skewed to low complexity over residues 134 to 145, 177 to 191, and 212 to 225; these read RSAPGAASAAAA, GSSS…SSSS, and GASV…SSPG. Positions 246 to 256 are enriched in basic and acidic residues; it reads ELDKKEQEAKP. Ser-257 is modified (phosphoserine). Residues 345–356 are compositionally biased toward gly residues; it reads LVGGQLSGGLGL. The segment at 460–488 adopts a C2H2-type zinc-finger fold; the sequence is HSCNWVAASGPCDKRFATSEELLSHLRTH. At Arg-584 the chain carries Omega-N-methylarginine.

It belongs to the Elbow/Noc family. In terms of assembly, interacts with DCAF7 and PHB2. Interacts with TLE4; increases transcriptional repression. As to expression, expressed in mammary epithelium.

It localises to the nucleus. It is found in the cytoplasm. Functionally, transcriptional corepressor which does not bind directly to DNA and may regulate transcription through recruitment of histone deacetylases to gene promoters. Regulates cell adhesion, migration and proliferation. May be required for segmental gene expression during hindbrain development. This chain is Zinc finger protein 703 (Znf703), found in Mus musculus (Mouse).